A 430-amino-acid chain; its full sequence is Bystin (430 aa).

2 stretches are compositionally biased toward basic residues: residues 1-12 (MGKDKKDRKHKG) and 26-35 (PSKRVKHRRE). 2 disordered regions span residues 1-45 (MGKD…ESFV) and 65-113 (MEEY…SETY). A compositionally biased stretch (basic and acidic residues) spans 68 to 78 (YGFRKTGDRKT). Positions 93–104 (RIDDDDEDDSDD) are enriched in acidic residues.

The protein belongs to the bystin family.

It localises to the nucleus. The protein localises to the nucleolus. In terms of biological role, required for processing of 20S pre-rRNA precursor and biogenesis of 40S ribosomal subunits. The polypeptide is Bystin (bysl) (Nematostella vectensis (Starlet sea anemone)).